Reading from the N-terminus, the 209-residue chain is Uridine kinase (209 aa).

12–19 (GGTGSGKS) is a binding site for ATP.

The protein belongs to the uridine kinase family.

Its subcellular location is the cytoplasm. It catalyses the reaction uridine + ATP = UMP + ADP + H(+). It carries out the reaction cytidine + ATP = CMP + ADP + H(+). It participates in pyrimidine metabolism; CTP biosynthesis via salvage pathway; CTP from cytidine: step 1/3. The protein operates within pyrimidine metabolism; UMP biosynthesis via salvage pathway; UMP from uridine: step 1/1. This chain is Uridine kinase, found in Clostridium tetani (strain Massachusetts / E88).